We begin with the raw amino-acid sequence, 284 residues long: Pantothenate synthetase (284 aa).

An ATP-binding site is contributed by 30–37 (MGNLHDGH). Histidine 37 serves as the catalytic Proton donor. Glutamine 61 is a binding site for (R)-pantoate. Glutamine 61 provides a ligand contact to beta-alanine. 149–152 (GEKD) serves as a coordination point for ATP. Position 155 (glutamine 155) interacts with (R)-pantoate. Residues valine 178 and 186–189 (LSSR) contribute to the ATP site.

Belongs to the pantothenate synthetase family. Homodimer.

It localises to the cytoplasm. The enzyme catalyses (R)-pantoate + beta-alanine + ATP = (R)-pantothenate + AMP + diphosphate + H(+). The protein operates within cofactor biosynthesis; (R)-pantothenate biosynthesis; (R)-pantothenate from (R)-pantoate and beta-alanine: step 1/1. In terms of biological role, catalyzes the condensation of pantoate with beta-alanine in an ATP-dependent reaction via a pantoyl-adenylate intermediate. The protein is Pantothenate synthetase of Enterobacter sp. (strain 638).